Consider the following 896-residue polypeptide: Phosphatidate phosphatase LPIN2 (896 aa).

Residues 1–108 form an N-LIP region; it reads MNYVGQLAGQ…LPAYLATSPI (108 aa). A Phosphoserine modification is found at Ser-106. Positions 120-208 are disordered; the sequence is TPLVKSGGDE…SSNASLKEEE (89 aa). The span at 152–162 shows a compositional bias: basic residues; that stretch reads VKKKKRRRKKY. The Nuclear localization signal signature appears at 153–158; the sequence is KKKKRR. 5 positions are modified to phosphoserine: Ser-174, Ser-186, Ser-187, Ser-243, and Ser-303. 2 disordered regions span residues 370–405 and 420–459; these read AEAP…DIYL and FPKS…TECL. Residues 387-396 show a composition bias toward basic residues; the sequence is KKKGVHKRSQ. A compositionally biased stretch (polar residues) spans 426–448; that stretch reads EPGSRQWPESDTLSGSQSPQSVG. Ser-566 bears the Phosphoserine mark. Residues 569–579 show a composition bias toward basic and acidic residues; that stretch reads KQLPESKEGKS. The interval 569 to 636 is disordered; sequence KQLPESKEGK…LSHGSTTSYK (68 aa). Acidic residues predominate over residues 604–617; that stretch reads SSSDEGSQELEESI. The C-LIP stretch occupies residues 635 to 837; that stretch reads YKKSLRLSSD…RIFTVNPKGE (203 aa). Positions 689–693 match the DXDXT motif motif; it reads DIDGT. Residues 700–704 carry the LXXIL motif motif; it reads LGQIL.

It belongs to the lipin family. Requires Mg(2+) as cofactor. Expressed in liver, lung, kidney, placenta, spleen, thymus, lymph node, prostate, testes, small intestine, and colon.

It is found in the nucleus. It localises to the cytoplasm. The protein localises to the cytosol. Its subcellular location is the endoplasmic reticulum membrane. The catalysed reaction is a 1,2-diacyl-sn-glycero-3-phosphate + H2O = a 1,2-diacyl-sn-glycerol + phosphate. Its activity is regulated as follows. Inhibited by N-ethylmaleimide. Its function is as follows. Acts as a magnesium-dependent phosphatidate phosphatase enzyme which catalyzes the conversion of phosphatidic acid to diacylglycerol during triglyceride, phosphatidylcholine and phosphatidylethanolamine biosynthesis in the endoplasmic reticulum membrane. Plays important roles in controlling the metabolism of fatty acids at different levels. Also acts as a nuclear transcriptional coactivator for PPARGC1A to modulate lipid metabolism. This chain is Phosphatidate phosphatase LPIN2, found in Homo sapiens (Human).